Here is a 239-residue protein sequence, read N- to C-terminus: Wilms tumor protein homolog (239 aa).

The 9aaTAD motif lies at M43–G51. 3 consecutive C2H2-type zinc fingers follow at residues F113–H137, Y143–H167, and F173–H195. 2 important for interaction with target DNA regions span residues S157 to K171 and S183 to H191. The short motif at K198–S200 is the KTS motif element. Residues F204–H228 form a C2H2-type 4 zinc finger. K234 is covalently cross-linked (Glycyl lysine isopeptide (Lys-Gly) (interchain with G-Cter in SUMO2)).

This sequence belongs to the EGR C2H2-type zinc-finger protein family. As to quaternary structure, interacts with ZNF224 via the zinc-finger region. Interacts with WTAP, AMER1 and SRY. Homodimer. Interacts with WTIP. Interacts with actively translating polysomes. Detected in nuclear ribonucleoprotein (mRNP) particles. Interacts with U2AF2. Interacts with HNRNPU via the zinc-finger region. Interacts with CITED2.

Its subcellular location is the nucleus speckle. The protein resides in the nucleus. It localises to the nucleoplasm. It is found in the cytoplasm. Transcription factor that plays an important role in cellular development and cell survival. Recognizes and binds to the DNA sequence 5'-GCG(T/G)GGGCG-3'. Regulates the expression of numerous target genes, including EPO. Plays an essential role for development of the urogenital system. It has a tumor suppressor as well as an oncogenic role in tumor formation. Function may be isoform-specific: isoforms lacking the KTS motif may act as transcription factors. Isoforms containing the KTS motif may bind mRNA and play a role in mRNA metabolism or splicing. The polypeptide is Wilms tumor protein homolog (WT1) (Sminthopsis macroura (Stripe-faced dunnart)).